Reading from the N-terminus, the 174-residue chain is Shikimate kinase 2 (174 aa).

12–17 (GCGKTT) contributes to the ATP binding site. Positions 16 and 32 each coordinate Mg(2+). Substrate-binding residues include Asp34, Arg58, and Gly79. The tract at residues 112–126 (QAAPEEDLRPTLTGK) is LID domain. An ATP-binding site is contributed by Arg120. Residue Arg139 coordinates substrate.

The protein belongs to the shikimate kinase family. AroL subfamily. As to quaternary structure, monomer. Requires Mg(2+) as cofactor.

The protein resides in the cytoplasm. It carries out the reaction shikimate + ATP = 3-phosphoshikimate + ADP + H(+). Its pathway is metabolic intermediate biosynthesis; chorismate biosynthesis; chorismate from D-erythrose 4-phosphate and phosphoenolpyruvate: step 5/7. Its function is as follows. Catalyzes the specific phosphorylation of the 3-hydroxyl group of shikimic acid using ATP as a cosubstrate. The polypeptide is Shikimate kinase 2 (Escherichia coli O7:K1 (strain IAI39 / ExPEC)).